We begin with the raw amino-acid sequence, 429 residues long: Ribosomal protein uS12 methylthiotransferase RimO (429 aa).

The MTTase N-terminal domain maps to 2 to 118 (HNIFLLSLGC…VLRAIGAEYR (117 aa)). The [4Fe-4S] cluster site is built by Cys11, Cys47, Cys81, Cys142, Cys146, and Cys149. The region spanning 128-357 (LTPPHYAFLK…MELQETISQE (230 aa)) is the Radical SAM core domain. The 68-residue stretch at 360-427 (REFEGNEIVV…PYDLEGEVIG (68 aa)) folds into the TRAM domain.

This sequence belongs to the methylthiotransferase family. RimO subfamily. [4Fe-4S] cluster is required as a cofactor.

It localises to the cytoplasm. The catalysed reaction is L-aspartate(89)-[ribosomal protein uS12]-hydrogen + (sulfur carrier)-SH + AH2 + 2 S-adenosyl-L-methionine = 3-methylsulfanyl-L-aspartate(89)-[ribosomal protein uS12]-hydrogen + (sulfur carrier)-H + 5'-deoxyadenosine + L-methionine + A + S-adenosyl-L-homocysteine + 2 H(+). Its function is as follows. Catalyzes the methylthiolation of an aspartic acid residue of ribosomal protein uS12. This Chlorobium limicola (strain DSM 245 / NBRC 103803 / 6330) protein is Ribosomal protein uS12 methylthiotransferase RimO.